Here is a 953-residue protein sequence, read N- to C-terminus: Protein ENHANCER OF LHP1 1 (953 aa).

WD repeat units lie at residues 15–55, 60–99, 102–143, 144–183, 192–232, 236–275, and 277–316; these read GGSA…TLPP, HHQDGVTSLALSNDSTLLASGSIDHCVKLYKFPSGEFQTN, RFTL…RVLK, GHKGPVTGLDFHPNGELLASIDTTGTVLCWELQNGVVSFT, GFNT…KLFA, DHLEAICYLTWAPNGKYIATSGLDKQVLLWDVDKKQDIDR, and KFEERICCMSWKPNGNALSVIDAKGRYGVWESLVPSSMLS. Disordered stretches follow at residues 347-370, 385-419, and 851-877; these read SESLDDAMGDSDDGESHHTSRKRL, EELNDGSSLPSASEYRKKSHRGHREKQGARSGAFK, and ESKVQNPPASIQTSENTEAVMKSSATK. The span at 349-359 shows a compositional bias: acidic residues; it reads SLDDAMGDSDD. Positions 853–877 are enriched in polar residues; that stretch reads KVQNPPASIQTSENTEAVMKSSATK. The Nuclear localization signal motif lies at 900 to 907; the sequence is TKKDKSDD. The segment at 919 to 953 is disordered; that stretch reads KNPVNNVNKEDKGQEKEVNQGEARRSSNPFLKSTV. Residues 926 to 943 are compositionally biased toward basic and acidic residues; it reads NKEDKGQEKEVNQGEARR. Over residues 944 to 953 the composition is skewed to polar residues; that stretch reads SSNPFLKSTV.

Interacts with EZA1/SWN, LHP1, SLD5 and CLF in the nucleus. As to expression, expressed in root meristematic zones, initiating lateral roots, young leaves and the shoot apex.

The protein resides in the nucleus. Its function is as follows. Participates in maintaining the H3K27me3 mark at target genes by interacting with LHP1-PRC2 complexes during replication, thus contributing to H3K27me3 inheritance. This Arabidopsis thaliana (Mouse-ear cress) protein is Protein ENHANCER OF LHP1 1.